Consider the following 95-residue polypeptide: Acylphosphatase (95 aa).

The region spanning 6-94 (RVRVIVKGIV…EDFTGFSVRY (89 aa)) is the Acylphosphatase-like domain. Catalysis depends on residues arginine 21 and asparagine 39.

The protein belongs to the acylphosphatase family.

The catalysed reaction is an acyl phosphate + H2O = a carboxylate + phosphate + H(+). In Caldivirga maquilingensis (strain ATCC 700844 / DSM 13496 / JCM 10307 / IC-167), this protein is Acylphosphatase (acyP).